We begin with the raw amino-acid sequence, 524 residues long: NAD(P)H-quinone oxidoreductase chain 4, chloroplastic (524 aa).

Helical transmembrane passes span 4–24, 31–51, 87–107, 113–133, 134–154, 167–187, 211–231, 242–262, 275–295, 308–328, 330–350, 386–406, 417–437, and 465–485; these read YPWL…IPLI, LIRW…TYVF, IALV…AWPV, LFYF…LAQD, LLLF…LLSM, FILY…TISL, ILVY…FPFH, HYST…YGFI, IFAP…ALVS, SSVS…DLGL, GAIL…FLAG, LALP…GIVA, IITC…LSMV, and VFII…PDLT.

It belongs to the complex I subunit 4 family.

The protein localises to the plastid. The protein resides in the chloroplast thylakoid membrane. It carries out the reaction a plastoquinone + NADH + (n+1) H(+)(in) = a plastoquinol + NAD(+) + n H(+)(out). It catalyses the reaction a plastoquinone + NADPH + (n+1) H(+)(in) = a plastoquinol + NADP(+) + n H(+)(out). This Staurastrum punctulatum (Green alga) protein is NAD(P)H-quinone oxidoreductase chain 4, chloroplastic.